We begin with the raw amino-acid sequence, 197 residues long: dTTP/UTP pyrophosphatase (197 aa).

The active-site Proton acceptor is aspartate 70.

The protein belongs to the Maf family. YhdE subfamily. The cofactor is a divalent metal cation.

It localises to the cytoplasm. The enzyme catalyses dTTP + H2O = dTMP + diphosphate + H(+). It carries out the reaction UTP + H2O = UMP + diphosphate + H(+). Nucleoside triphosphate pyrophosphatase that hydrolyzes dTTP and UTP. May have a dual role in cell division arrest and in preventing the incorporation of modified nucleotides into cellular nucleic acids. In Methanosarcina mazei (strain ATCC BAA-159 / DSM 3647 / Goe1 / Go1 / JCM 11833 / OCM 88) (Methanosarcina frisia), this protein is dTTP/UTP pyrophosphatase.